Consider the following 307-residue polypeptide: 4-hydroxybenzoate octaprenyltransferase (307 aa).

The next 7 membrane-spanning stretches (helical) occupy residues 27 to 47 (AGWL…AGGF), 50 to 70 (WHLL…GCCI), 101 to 121 (LAVG…TNAL), 142 to 162 (CVAM…PMAF), 179 to 199 (AAVP…VLAY), 239 to 259 (LLAW…AAGL), and 285 to 305 (FRLN…DLGW).

This sequence belongs to the UbiA prenyltransferase family. It depends on Mg(2+) as a cofactor.

It is found in the cell inner membrane. The catalysed reaction is all-trans-octaprenyl diphosphate + 4-hydroxybenzoate = 4-hydroxy-3-(all-trans-octaprenyl)benzoate + diphosphate. It functions in the pathway cofactor biosynthesis; ubiquinone biosynthesis. Functionally, catalyzes the prenylation of para-hydroxybenzoate (PHB) with an all-trans polyprenyl group. Mediates the second step in the final reaction sequence of ubiquinone-8 (UQ-8) biosynthesis, which is the condensation of the polyisoprenoid side chain with PHB, generating the first membrane-bound Q intermediate 3-octaprenyl-4-hydroxybenzoate. The sequence is that of 4-hydroxybenzoate octaprenyltransferase from Methylibium petroleiphilum (strain ATCC BAA-1232 / LMG 22953 / PM1).